Here is an 88-residue protein sequence, read N- to C-terminus: Small ribosomal subunit protein bS20 (88 aa).

The segment at 1 to 28 (MANIKSQIKRNRQNEKRRLRNKSVKSSL) is disordered. Residues 7–23 (QIKRNRQNEKRRLRNKS) are compositionally biased toward basic residues.

This sequence belongs to the bacterial ribosomal protein bS20 family.

Functionally, binds directly to 16S ribosomal RNA. The polypeptide is Small ribosomal subunit protein bS20 (Salinispora tropica (strain ATCC BAA-916 / DSM 44818 / JCM 13857 / NBRC 105044 / CNB-440)).